The primary structure comprises 104 residues: Replication restart protein PriB (104 aa).

The 101-residue stretch at 1 to 101 (MTNRLALSGT…LHAEQIELID (101 aa)) folds into the SSB domain.

This sequence belongs to the PriB family. As to quaternary structure, homodimer. Interacts with PriA and DnaT. Component of the replication restart primosome. Primosome assembly occurs via a 'hand-off' mechanism. PriA binds to replication forks, subsequently PriB then DnaT bind; DnaT then displaces ssDNA to generate the helicase loading substrate.

In terms of biological role, involved in the restart of stalled replication forks, which reloads the replicative helicase on sites other than the origin of replication; the PriA-PriB pathway is the major replication restart pathway. During primosome assembly it facilitates complex formation between PriA and DnaT on DNA; stabilizes PriA on DNA. Stimulates the DNA unwinding activity of PriA helicase. In Salmonella agona (strain SL483), this protein is Replication restart protein PriB.